Consider the following 375-residue polypeptide: N-acetyldiaminopimelate deacetylase (375 aa).

The active site involves Asp-69. The active-site Proton acceptor is Glu-128.

This sequence belongs to the peptidase M20A family. N-acetyldiaminopimelate deacetylase subfamily.

It carries out the reaction N-acetyl-(2S,6S)-2,6-diaminopimelate + H2O = (2S,6S)-2,6-diaminopimelate + acetate. It participates in amino-acid biosynthesis; L-lysine biosynthesis via DAP pathway; LL-2,6-diaminopimelate from (S)-tetrahydrodipicolinate (acetylase route): step 3/3. Its function is as follows. Catalyzes the conversion of N-acetyl-diaminopimelate to diaminopimelate and acetate. The polypeptide is N-acetyldiaminopimelate deacetylase (Priestia megaterium (strain ATCC 12872 / QMB1551) (Bacillus megaterium)).